The primary structure comprises 469 residues: ATP synthase subunit beta (469 aa).

Residue 155–162 (GGAGCGKT) coordinates ATP.

Belongs to the ATPase alpha/beta chains family. F-type ATPases have 2 components, CF(1) - the catalytic core - and CF(0) - the membrane proton channel. CF(1) has five subunits: alpha(3), beta(3), gamma(1), delta(1), epsilon(1). CF(0) has three main subunits: a(1), b(2) and c(9-12). The alpha and beta chains form an alternating ring which encloses part of the gamma chain. CF(1) is attached to CF(0) by a central stalk formed by the gamma and epsilon chains, while a peripheral stalk is formed by the delta and b chains.

Its subcellular location is the cell inner membrane. The catalysed reaction is ATP + H2O + 4 H(+)(in) = ADP + phosphate + 5 H(+)(out). In terms of biological role, produces ATP from ADP in the presence of a proton gradient across the membrane. The catalytic sites are hosted primarily by the beta subunits. The chain is ATP synthase subunit beta from Syntrophus aciditrophicus (strain SB).